Reading from the N-terminus, the 597-residue chain is uncharacterized protein (597 aa).

A PWWP domain is found at 16–78 (VGRLVWVRRR…LENSKTVKAF (63 aa)). 2 disordered regions span residues 126 to 210 (NLCN…MRGL) and 449 to 482 (QLKGKRNSRQMSKKQEERRNVYGEEANNNSSTPH). A compositionally biased stretch (basic and acidic residues) spans 134 to 143 (EDSKRCLSGK). The segment covering 144 to 161 (EDEDSGSSDAEETEDDEL) has biased composition (acidic residues). Polar residues predominate over residues 166–185 (EQLQSSISSQEMNNVGASKV). The span at 450 to 460 (LKGKRNSRQMS) shows a compositional bias: basic residues. Residues 461-470 (KKQEERRNVY) show a composition bias toward basic and acidic residues.

This is an uncharacterized protein from Arabidopsis thaliana (Mouse-ear cress).